The sequence spans 348 residues: GTP 3',8-cyclase (348 aa).

Residues Pro24–Asp242 enclose the Radical SAM core domain. Residue Arg33 coordinates GTP. Positions 40 and 44 each coordinate [4Fe-4S] cluster. Residue Tyr46 coordinates S-adenosyl-L-methionine. Residue Cys47 participates in [4Fe-4S] cluster binding. Arg82 provides a ligand contact to GTP. Gly86 contributes to the S-adenosyl-L-methionine binding site. Thr115 contributes to the GTP binding site. Residue Ser139 coordinates S-adenosyl-L-methionine. Lys175 provides a ligand contact to GTP. Met209 serves as a coordination point for S-adenosyl-L-methionine. [4Fe-4S] cluster-binding residues include Cys272 and Cys275. Residue Arg277–Arg279 coordinates GTP. Cys289 is a binding site for [4Fe-4S] cluster.

It belongs to the radical SAM superfamily. MoaA family. In terms of assembly, monomer and homodimer. The cofactor is [4Fe-4S] cluster.

The enzyme catalyses GTP + AH2 + S-adenosyl-L-methionine = (8S)-3',8-cyclo-7,8-dihydroguanosine 5'-triphosphate + 5'-deoxyadenosine + L-methionine + A + H(+). It participates in cofactor biosynthesis; molybdopterin biosynthesis. Functionally, catalyzes the cyclization of GTP to (8S)-3',8-cyclo-7,8-dihydroguanosine 5'-triphosphate. The protein is GTP 3',8-cyclase of Rhizobium leguminosarum bv. trifolii (strain WSM2304).